The primary structure comprises 417 residues: Serpin H1 (417 aa).

An N-terminal signal peptide occupies residues 1 to 17 (MRSLLLGTLCLLAVALA). Position 93 is an N6-succinyllysine (Lys-93). N-linked (GlcNAc...) asparagine glycans are attached at residues Asn-119 and Asn-124. Ser-140 bears the Phosphoserine mark. N6-acetyllysine is present on Lys-206. An N6-succinyllysine modification is found at Lys-295. At Lys-318 the chain carries N6-acetyllysine. The N-linked (GlcNAc...) asparagine glycan is linked to Asn-394. Residues 414–417 (RDEL) carry the Prevents secretion from ER motif.

Belongs to the serpin family.

The protein resides in the endoplasmic reticulum lumen. Functionally, binds specifically to collagen. Could be involved as a chaperone in the biosynthetic pathway of collagen. The sequence is that of Serpin H1 (Serpinh1) from Rattus norvegicus (Rat).